The primary structure comprises 178 residues: CDP-archaeol synthase (178 aa).

5 consecutive transmembrane segments (helical) span residues 3–23, 56–76, 87–107, 123–145, and 150–169; these read LLLL…ANAV, FFGI…VILY, LFGY…GDML, APIL…FYPL, and IVLL…IIAY.

Belongs to the CDP-archaeol synthase family. Mg(2+) serves as cofactor.

It is found in the cell membrane. The catalysed reaction is 2,3-bis-O-(geranylgeranyl)-sn-glycerol 1-phosphate + CTP + H(+) = CDP-2,3-bis-O-(geranylgeranyl)-sn-glycerol + diphosphate. It participates in membrane lipid metabolism; glycerophospholipid metabolism. In terms of biological role, catalyzes the formation of CDP-2,3-bis-(O-geranylgeranyl)-sn-glycerol (CDP-archaeol) from 2,3-bis-(O-geranylgeranyl)-sn-glycerol 1-phosphate (DGGGP) and CTP. This reaction is the third ether-bond-formation step in the biosynthesis of archaeal membrane lipids. This chain is CDP-archaeol synthase, found in Methanococcus maripaludis (strain C6 / ATCC BAA-1332).